The sequence spans 341 residues: Ketol-acid reductoisomerase (NADP(+)) (341 aa).

A KARI N-terminal Rossmann domain is found at 1-181; that stretch reads MARVYREGDI…GCARAGVLET (181 aa). NADP(+) is bound by residues 24–27, serine 50, serine 52, and 82–85; these read FGSQ and DERQ. Histidine 107 is a catalytic residue. Glycine 133 is an NADP(+) binding site. The region spanning 182–327 is the KARI C-terminal knotted domain; sequence TFAEETETDL…AELRALAAEG (146 aa). Mg(2+)-binding residues include aspartate 190, glutamate 194, glutamate 226, and glutamate 230. Residue serine 251 participates in substrate binding.

The protein belongs to the ketol-acid reductoisomerase family. Requires Mg(2+) as cofactor.

The catalysed reaction is (2R)-2,3-dihydroxy-3-methylbutanoate + NADP(+) = (2S)-2-acetolactate + NADPH + H(+). It carries out the reaction (2R,3R)-2,3-dihydroxy-3-methylpentanoate + NADP(+) = (S)-2-ethyl-2-hydroxy-3-oxobutanoate + NADPH + H(+). It participates in amino-acid biosynthesis; L-isoleucine biosynthesis; L-isoleucine from 2-oxobutanoate: step 2/4. It functions in the pathway amino-acid biosynthesis; L-valine biosynthesis; L-valine from pyruvate: step 2/4. Involved in the biosynthesis of branched-chain amino acids (BCAA). Catalyzes an alkyl-migration followed by a ketol-acid reduction of (S)-2-acetolactate (S2AL) to yield (R)-2,3-dihydroxy-isovalerate. In the isomerase reaction, S2AL is rearranged via a Mg-dependent methyl migration to produce 3-hydroxy-3-methyl-2-ketobutyrate (HMKB). In the reductase reaction, this 2-ketoacid undergoes a metal-dependent reduction by NADPH to yield (R)-2,3-dihydroxy-isovalerate. This Rubrobacter xylanophilus (strain DSM 9941 / JCM 11954 / NBRC 16129 / PRD-1) protein is Ketol-acid reductoisomerase (NADP(+)).